Here is a 484-residue protein sequence, read N- to C-terminus: tRNA sulfurtransferase (484 aa).

The 105-residue stretch at 63-167 (DVFADRLACI…QDKLYMVERR (105 aa)) folds into the THUMP domain. Residues 185-186 (LI), Lys-267, Gly-289, and Gln-298 contribute to the ATP site. Cys-346 and Cys-458 are joined by a disulfide. Residues 406-484 (VASGEIIIDV…GYTNVKVYRP (79 aa)) form the Rhodanese domain. Cys-458 (cysteine persulfide intermediate) is an active-site residue.

The protein belongs to the ThiI family.

Its subcellular location is the cytoplasm. It carries out the reaction [ThiI sulfur-carrier protein]-S-sulfanyl-L-cysteine + a uridine in tRNA + 2 reduced [2Fe-2S]-[ferredoxin] + ATP + H(+) = [ThiI sulfur-carrier protein]-L-cysteine + a 4-thiouridine in tRNA + 2 oxidized [2Fe-2S]-[ferredoxin] + AMP + diphosphate. The enzyme catalyses [ThiS sulfur-carrier protein]-C-terminal Gly-Gly-AMP + S-sulfanyl-L-cysteinyl-[cysteine desulfurase] + AH2 = [ThiS sulfur-carrier protein]-C-terminal-Gly-aminoethanethioate + L-cysteinyl-[cysteine desulfurase] + A + AMP + 2 H(+). It participates in cofactor biosynthesis; thiamine diphosphate biosynthesis. Catalyzes the ATP-dependent transfer of a sulfur to tRNA to produce 4-thiouridine in position 8 of tRNAs, which functions as a near-UV photosensor. Also catalyzes the transfer of sulfur to the sulfur carrier protein ThiS, forming ThiS-thiocarboxylate. This is a step in the synthesis of thiazole, in the thiamine biosynthesis pathway. The sulfur is donated as persulfide by IscS. This Shewanella frigidimarina (strain NCIMB 400) protein is tRNA sulfurtransferase.